A 289-amino-acid polypeptide reads, in one-letter code: Agroclavine dehydrogenase (289 aa).

It belongs to the fgaFS/easG family. Monomer.

It catalyses the reaction agroclavine + NADP(+) = didehydroagroclavine + NADPH + H(+). The protein operates within alkaloid biosynthesis; ergot alkaloid biosynthesis. Agroclavine dehydrogenase; part of the gene cluster that mediates the biosynthesis of fungal ergot alkaloid ergovaline, the predominant ergopeptine product in E.festucae var. lolii. DmaW catalyzes the first step of ergot alkaloid biosynthesis by condensing dimethylallyl diphosphate (DMAP) and tryptophan to form 4-dimethylallyl-L-tryptophan. The second step is catalyzed by the methyltransferase easF that methylates 4-dimethylallyl-L-tryptophan in the presence of S-adenosyl-L-methionine, resulting in the formation of 4-dimethylallyl-L-abrine. The catalase easC and the FAD-dependent oxidoreductase easE then transform 4-dimethylallyl-L-abrine to chanoclavine-I which is further oxidized by easD in the presence of NAD(+), resulting in the formation of chanoclavine-I aldehyde. Agroclavine dehydrogenase easG then mediates the conversion of chanoclavine-I aldehyde to agroclavine via a non-enzymatic adduct reaction: the substrate is an iminium intermediate that is formed spontaneously from chanoclavine-I aldehyde in the presence of glutathione. Further conversion of agroclavine to paspalic acid is a two-step process involving oxidation of agroclavine to elymoclavine and of elymoclavine to paspalic acid, the second step being performed by the elymoclavine oxidase cloA. However, cloA does not encode a functional enzyme indicating that C.fusiformis terminates its ergot alkaloid pathway at elymoclavine. This is Agroclavine dehydrogenase from Claviceps fusiformis (Ergot fungus).